A 172-amino-acid polypeptide reads, in one-letter code: UPF0316 protein Clos_0555 (172 aa).

Transmembrane regions (helical) follow at residues Ala-3 to Ile-23, Val-34 to Val-54, and Pro-61 to Leu-81.

This sequence belongs to the UPF0316 family.

It localises to the cell membrane. The polypeptide is UPF0316 protein Clos_0555 (Alkaliphilus oremlandii (strain OhILAs) (Clostridium oremlandii (strain OhILAs))).